The following is a 69-amino-acid chain: MIYKVFYQEKADEVPVREKTDSLYIEGVSERDVRTKLKDQKYNIEFVQPVDGAFLEYEKQSENFKVLEL.

Belongs to the RNA polymerase subunit epsilon family. As to quaternary structure, RNAP is composed of a core of 2 alpha, a beta and a beta' subunit. The core is associated with a delta subunit, and at least one of epsilon or omega. When a sigma factor is associated with the core the holoenzyme is formed, which can initiate transcription.

The enzyme catalyses RNA(n) + a ribonucleoside 5'-triphosphate = RNA(n+1) + diphosphate. A non-essential component of RNA polymerase (RNAP). The polypeptide is DNA-directed RNA polymerase subunit epsilon (Bacillus velezensis (strain DSM 23117 / BGSC 10A6 / LMG 26770 / FZB42) (Bacillus amyloliquefaciens subsp. plantarum)).